The primary structure comprises 161 residues: Nuclear transcription factor Y subunit B-3 (161 aa).

The interval 1–23 (MADSDNDSGGHKDGGNASTREQD) is disordered. A2 carries the N-acetylalanine modification. Residues 8 to 23 (SGGHKDGGNASTREQD) are compositionally biased toward basic and acidic residues. A DNA-binding region spans residues 26-32 (LPIANVS). Residues 53-64 (VQECVSEFISFI) are subunit association domain (SAD). The tract at residues 114–146 (EKTTTAGRQGDKEGGGGGGGAGSGSGGAPMYGG) is disordered. Residues 128-146 (GGGGGGAGSGSGGAPMYGG) are compositionally biased toward gly residues.

This sequence belongs to the NFYB/HAP3 subunit family. In terms of assembly, heterotrimeric transcription factor composed of three components, NF-YA, NF-YB and NF-YC. NF-YB and NF-YC must interact and dimerize for NF-YA association and DNA binding. Component of a heat stress-inducible transcriptional complex with NF-YA and NF-YB subunits made, at least, of NFYA2, NFYB3 and DPB3-1 in cooperation with DREB2A. Binds directly with DPB3-1. In terms of tissue distribution, ubiquitous. Expressed in seedlings, petioles, hypocotyls, reproductive organ tissues and leaves.

Its subcellular location is the nucleus. The protein resides in the cytoplasm. It is found in the cytosol. Component of the NF-Y/HAP transcription factor complex. The NF-Y complex stimulates the transcription of various genes by recognizing and binding to a CCAAT motif in promoters. Promotes the expression of heat stress-inducible genes by contributing to the formation of a heat stress-specific transcriptional complex with NF-Y subunits (e.g. DPB3-1, NF-YA2 and NF-YB3) and DREB2A at the promoter of target genes, thus promoting heat tolerance. This Arabidopsis thaliana (Mouse-ear cress) protein is Nuclear transcription factor Y subunit B-3.